The following is a 370-amino-acid chain: Probable phosphoserine aminotransferase (370 aa).

Arg45 lines the L-glutamate pocket. Pyridoxal 5'-phosphate-binding positions include 79 to 80 (GT), Trp105, Thr154, Asp175, and Gln198. N6-(pyridoxal phosphate)lysine is present on Lys199. Residue 240-241 (NT) coordinates pyridoxal 5'-phosphate.

The protein belongs to the class-V pyridoxal-phosphate-dependent aminotransferase family. SerC subfamily. As to quaternary structure, homodimer. The cofactor is pyridoxal 5'-phosphate.

It catalyses the reaction O-phospho-L-serine + 2-oxoglutarate = 3-phosphooxypyruvate + L-glutamate. The enzyme catalyses 4-(phosphooxy)-L-threonine + 2-oxoglutarate = (R)-3-hydroxy-2-oxo-4-phosphooxybutanoate + L-glutamate. Its pathway is amino-acid biosynthesis; L-serine biosynthesis; L-serine from 3-phospho-D-glycerate: step 2/3. The protein operates within cofactor biosynthesis; pyridoxine 5'-phosphate biosynthesis; pyridoxine 5'-phosphate from D-erythrose 4-phosphate: step 3/5. Its function is as follows. Catalyzes the reversible conversion of 3-phosphohydroxypyruvate to phosphoserine and of 3-hydroxy-2-oxo-4-phosphonooxybutanoate to phosphohydroxythreonine. The polypeptide is Probable phosphoserine aminotransferase (Caenorhabditis elegans).